Consider the following 100-residue polypeptide: MSHEPEYKDWQQIVELIRSSVDNQQHEMLLTMLMTPDERESLTARVNILNELLKGELSQRQISQMLGVGIATITRGSNELKSKSDTDKDKLKTLLEQGAQ.

Residues 59 to 82 mediate DNA binding; the sequence is QRQISQMLGVGIATITRGSNELKS. The span at 78–93 shows a compositional bias: basic and acidic residues; that stretch reads NELKSKSDTDKDKLKT. Residues 78–100 form a disordered region; that stretch reads NELKSKSDTDKDKLKTLLEQGAQ.

It belongs to the TrpR family. As to quaternary structure, homodimer.

The protein localises to the cytoplasm. Its function is as follows. This protein is an aporepressor. When complexed with L-tryptophan it binds the operator region of the trp operon and prevents the initiation of transcription. This chain is Trp operon repressor homolog, found in Vibrio campbellii (strain ATCC BAA-1116).